The following is a 491-amino-acid chain: (R)-citramalate synthase CimA (491 aa).

One can recognise a Pyruvate carboxyltransferase domain in the interval 3–254; the sequence is VRIFDTTLRD…DTKIKMEKLY (252 aa).

Belongs to the alpha-IPM synthase/homocitrate synthase family. Homodimer.

The enzyme catalyses pyruvate + acetyl-CoA + H2O = (3R)-citramalate + CoA + H(+). Its pathway is amino-acid biosynthesis; L-isoleucine biosynthesis; 2-oxobutanoate from pyruvate: step 1/3. Functionally, catalyzes the condensation of pyruvate and acetyl-coenzyme A to form (R)-citramalate. This is (R)-citramalate synthase CimA (cimA) from Methanocaldococcus jannaschii (strain ATCC 43067 / DSM 2661 / JAL-1 / JCM 10045 / NBRC 100440) (Methanococcus jannaschii).